Here is a 190-residue protein sequence, read N- to C-terminus: Holliday junction branch migration complex subunit RuvA (190 aa).

The domain I stretch occupies residues 1–63 (MLDFIKGKVI…EESIEIYGFL (63 aa)). The domain II stretch occupies residues 64 to 139 (ESSERDLFEE…ILPSLQYEKD (76 aa)). Residue Asp139 is a region of interest, flexible linker. A domain III region spans residues 139–190 (DQKYDDILSALLNLGYKRLEAKEVLDKIYNNEKDEATIIRESLSILAGKDGK).

Belongs to the RuvA family. Homotetramer. Forms an RuvA(8)-RuvB(12)-Holliday junction (HJ) complex. HJ DNA is sandwiched between 2 RuvA tetramers; dsDNA enters through RuvA and exits via RuvB. An RuvB hexamer assembles on each DNA strand where it exits the tetramer. Each RuvB hexamer is contacted by two RuvA subunits (via domain III) on 2 adjacent RuvB subunits; this complex drives branch migration. In the full resolvosome a probable DNA-RuvA(4)-RuvB(12)-RuvC(2) complex forms which resolves the HJ.

It is found in the cytoplasm. The RuvA-RuvB-RuvC complex processes Holliday junction (HJ) DNA during genetic recombination and DNA repair, while the RuvA-RuvB complex plays an important role in the rescue of blocked DNA replication forks via replication fork reversal (RFR). RuvA specifically binds to HJ cruciform DNA, conferring on it an open structure. The RuvB hexamer acts as an ATP-dependent pump, pulling dsDNA into and through the RuvAB complex. HJ branch migration allows RuvC to scan DNA until it finds its consensus sequence, where it cleaves and resolves the cruciform DNA. The polypeptide is Holliday junction branch migration complex subunit RuvA (Thermodesulfovibrio yellowstonii (strain ATCC 51303 / DSM 11347 / YP87)).